The sequence spans 271 residues: tRNA pseudouridine synthase A (271 aa).

Catalysis depends on Asp52, which acts as the Nucleophile. Tyr110 provides a ligand contact to substrate.

The protein belongs to the tRNA pseudouridine synthase TruA family. As to quaternary structure, homodimer.

It catalyses the reaction uridine(38/39/40) in tRNA = pseudouridine(38/39/40) in tRNA. In terms of biological role, formation of pseudouridine at positions 38, 39 and 40 in the anticodon stem and loop of transfer RNAs. The protein is tRNA pseudouridine synthase A of Maridesulfovibrio salexigens (strain ATCC 14822 / DSM 2638 / NCIMB 8403 / VKM B-1763) (Desulfovibrio salexigens).